Here is a 653-residue protein sequence, read N- to C-terminus: DNA mismatch repair protein MutL (653 aa).

The interval 375-425 (QNTPDYPRKAPRDNDRDESDNPQVRERAVSNPWVASPKTASTGKERYGSAS) is disordered. Basic and acidic residues predominate over residues 380–389 (YPRKAPRDND).

The protein belongs to the DNA mismatch repair MutL/HexB family.

Its function is as follows. This protein is involved in the repair of mismatches in DNA. It is required for dam-dependent methyl-directed DNA mismatch repair. May act as a 'molecular matchmaker', a protein that promotes the formation of a stable complex between two or more DNA-binding proteins in an ATP-dependent manner without itself being part of a final effector complex. This is DNA mismatch repair protein MutL from Vibrio cholerae serotype O1 (strain ATCC 39541 / Classical Ogawa 395 / O395).